Consider the following 319-residue polypeptide: L-lactate dehydrogenase 2 (319 aa).

NAD(+) contacts are provided by residues valine 16, aspartate 37, lysine 42, tyrosine 68, and 82–83; that span reads GA. Substrate-binding residues include glutamine 85 and arginine 91. NAD(+) is bound by residues serine 104, 121–123, and serine 146; that span reads AAN. A substrate-binding site is contributed by 123 to 126; sequence NPVD. A substrate-binding site is contributed by 151 to 154; sequence DSAR. Histidine 178 functions as the Proton acceptor in the catalytic mechanism. Tyrosine 222 bears the Phosphotyrosine mark. Threonine 231 is a substrate binding site.

Belongs to the LDH/MDH superfamily. LDH family. As to quaternary structure, homotetramer.

The protein localises to the cytoplasm. It catalyses the reaction (S)-lactate + NAD(+) = pyruvate + NADH + H(+). It functions in the pathway fermentation; pyruvate fermentation to lactate; (S)-lactate from pyruvate: step 1/1. Catalyzes the conversion of lactate to pyruvate (Potential). Contributes to S.aureus growth during nitrosative stress in both aerobically and anaerobically cultured cells, despite playing a secondary role in this resistance mechanism. The sequence is that of L-lactate dehydrogenase 2 from Staphylococcus aureus (strain Mu3 / ATCC 700698).